A 109-amino-acid chain; its full sequence is MEDRVEISMLMDLYSSLLTEKQRSVMALYYDDDLSLAEIAELNKTSRQAIHDLIKRCDKQLLSYESKLNLLQKSMRKEKYIMNFLEELKEKYSVSDKDYLMFKEKLENL.

The protein belongs to the UPF0122 family.

In terms of biological role, might take part in the signal recognition particle (SRP) pathway. This is inferred from the conservation of its genetic proximity to ftsY/ffh. May be a regulatory protein. This Clostridium botulinum (strain Alaska E43 / Type E3) protein is UPF0122 protein CLH_1195.